Consider the following 234-residue polypeptide: DNA repair protein RecO (234 aa).

Belongs to the RecO family.

In terms of biological role, involved in DNA repair and RecF pathway recombination. The polypeptide is DNA repair protein RecO (Halorhodospira halophila (strain DSM 244 / SL1) (Ectothiorhodospira halophila (strain DSM 244 / SL1))).